Here is a 149-residue protein sequence, read N- to C-terminus: Oligosaccharyltransferase complex subunit OSTC (149 aa).

Residues methionine 1 to threonine 32 are Cytoplasmic-facing. The chain crosses the membrane as a helical span at residues valine 33–isoleucine 53. Over valine 54 to tyrosine 83 the chain is Extracellular. A helical membrane pass occupies residues isoleucine 84 to leucine 104. Over aspartate 105–arginine 117 the chain is Cytoplasmic. The helical transmembrane segment at phenylalanine 118 to phenylalanine 138 threads the bilayer. Residues methionine 139–glycine 149 are Extracellular-facing.

It belongs to the OSTC family. As to quaternary structure, component of STT3A-containing oligosaccharyl transferase (OST-A) complex. STT3A-containing complex assembly occurs through the formation of 3 subcomplexes. Subcomplex 1 contains RPN1 and TMEM258, subcomplex 2 contains the STT3A-specific subunits STT3A, DC2/OSTC, and KCP2 as well as the core subunit OST4, and subcomplex 3 contains RPN2, DAD1, and OST48. The OST-A complex can form stable complexes with the Sec61 complex or with both the Sec61 and TRAP complexes. Interacts with PSEN1 and NCSTN; indicative for an association with the gamma-secretase complex.

It localises to the endoplasmic reticulum. Its subcellular location is the membrane. It participates in protein modification; protein glycosylation. Functionally, subunit of STT3A-containing oligosaccharyl transferase (OST-A) complex that catalyzes the initial transfer of a defined glycan (Glc(3)Man(9)GlcNAc(2) in eukaryotes) from the lipid carrier dolichol-pyrophosphate to an asparagine residue within an Asn-X-Ser/Thr consensus motif in nascent polypeptide chains, the first step in protein N-glycosylation. N-glycosylation occurs cotranslationally and the complex associates with the Sec61 complex at the channel-forming translocon complex that mediates protein translocation across the endoplasmic reticulum (ER). Within the OST-A complex, acts as an adapter that anchors the OST-A complex to the Sec61 complex. May be involved in N-glycosylation of APP (amyloid-beta precursor protein). Can modulate gamma-secretase cleavage of APP by enhancing endoprotelysis of PSEN1. This is Oligosaccharyltransferase complex subunit OSTC from Bos taurus (Bovine).